We begin with the raw amino-acid sequence, 245 residues long: MIIPAIDLIDGQVVRLYQGDYAQQTTFNLSPLDQLKSYQQQGASLLHIVDLTGAKEPDRRQTALISELVNNLDTPIQVGGGIRTEAQLSELLEIGVSRVVIGSLAVKEPELVKSWFTKYGSDAICLALDVNINEQGEKIVAVSGWQSGGGKSLESLVEEFKSVGLKHALVTDISRDGTLKGANTELYYEIATLYPEIQWQASGGIATLDDVNAVKQSGATGIIIGKALLINQFTVEEAIACWPNA.

The active-site Proton acceptor is the D7. D129 (proton donor) is an active-site residue.

It belongs to the HisA/HisF family.

It localises to the cytoplasm. The enzyme catalyses 1-(5-phospho-beta-D-ribosyl)-5-[(5-phospho-beta-D-ribosylamino)methylideneamino]imidazole-4-carboxamide = 5-[(5-phospho-1-deoxy-D-ribulos-1-ylimino)methylamino]-1-(5-phospho-beta-D-ribosyl)imidazole-4-carboxamide. It functions in the pathway amino-acid biosynthesis; L-histidine biosynthesis; L-histidine from 5-phospho-alpha-D-ribose 1-diphosphate: step 4/9. The chain is 1-(5-phosphoribosyl)-5-[(5-phosphoribosylamino)methylideneamino] imidazole-4-carboxamide isomerase from Shewanella pealeana (strain ATCC 700345 / ANG-SQ1).